A 565-amino-acid polypeptide reads, in one-letter code: Sensor histidine kinase YpdA (565 aa).

Topologically, residues Met-1–Glu-3 are cytoplasmic. The helical transmembrane segment at Ile-4–Phe-24 threads the bilayer. At Leu-25–Leu-45 the chain is on the periplasmic side. The helical transmembrane segment at Leu-46–Val-66 threads the bilayer. At Glu-67–Arg-74 the chain is on the cytoplasmic side. The helical transmembrane segment at Ile-75–Val-95 threads the bilayer. The Periplasmic portion of the chain corresponds to Ile-96–Gly-107. The chain crosses the membrane as a helical span at residues Gly-108–Ile-128. Residues Asn-129 to Arg-139 are Cytoplasmic-facing. The chain crosses the membrane as a helical span at residues Val-140–Ala-160. Residues Pro-161–Lys-172 are Periplasmic-facing. The helical transmembrane segment at Ile-173–Ser-193 threads the bilayer. Residues Val-194–Leu-565 lie on the Cytoplasmic side of the membrane. The region spanning Val-223 to Thr-342 is the GAF domain. Positions Gln-343–Arg-554 constitute a Histidine kinase domain. Residue His-371 is modified to Phosphohistidine; by autocatalysis.

In terms of assembly, interacts with BtsT and YhjX. Post-translationally, autophosphorylated.

It localises to the cell inner membrane. It carries out the reaction ATP + protein L-histidine = ADP + protein N-phospho-L-histidine.. In terms of biological role, member of the two-component regulatory system YpdA/YpdB, which is part of a nutrient-sensing regulatory network composed of YpdA/YpdB, the high-affinity pyruvate signaling system BtsS/BtsR and their respective target proteins, YhjX and BtsT. YpdA activates YpdB by phosphorylation in response to high concentrations of extracellular pyruvate. Activation of the YpdA/YpdB signaling cascade also promotes BtsS/BtsR-mediated btsT expression. The protein is Sensor histidine kinase YpdA (ypdA) of Escherichia coli (strain K12).